A 211-amino-acid chain; its full sequence is Urease accessory protein UreG (211 aa).

GTP is bound at residue 11 to 18 (GPVGAGKT).

It belongs to the SIMIBI class G3E GTPase family. UreG subfamily. Homodimer. UreD, UreF and UreG form a complex that acts as a GTP-hydrolysis-dependent molecular chaperone, activating the urease apoprotein by helping to assemble the nickel containing metallocenter of UreC. The UreE protein probably delivers the nickel.

The protein localises to the cytoplasm. Functionally, facilitates the functional incorporation of the urease nickel metallocenter. This process requires GTP hydrolysis, probably effectuated by UreG. The chain is Urease accessory protein UreG from Actinobacillus pleuropneumoniae serotype 5b (strain L20).